A 515-amino-acid polypeptide reads, in one-letter code: Ribonuclease Y (515 aa).

The chain crosses the membrane as a helical span at residues 6-26; it reads LTSFVIITLSLAVGLTGGYYG. Positions 205–290 constitute a KH domain; sequence TVSVVPLPND…EMVEKARKEI (86 aa). The HD domain occupies 331-424; that stretch reads VLRHSVEVAH…VQAADAISAS (94 aa).

It belongs to the RNase Y family.

Its subcellular location is the cell membrane. Its function is as follows. Endoribonuclease that initiates mRNA decay. In Syntrophomonas wolfei subsp. wolfei (strain DSM 2245B / Goettingen), this protein is Ribonuclease Y.